The sequence spans 347 residues: uncharacterized protein (347 aa).

The first 26 residues, 1–26, serve as a signal peptide directing secretion; it reads MQGRVAGSCAPLGLLLVCLHLPGLFA. A compositionally biased stretch (polar residues) spans 41 to 60; it reads GTNLPQLGQPSSTGPSNSEH. Disordered stretches follow at residues 41–110 and 148–189; these read GTNL…MDSW and SGPL…AGGK. The segment covering 148-157 has biased composition (low complexity); it reads SGPLPGESSP.

As to quaternary structure, binds to numerous extracellular matrix proteins.

It is found in the secreted. Its subcellular location is the extracellular space. The protein localises to the extracellular matrix. This is an uncharacterized protein from Pan troglodytes (Chimpanzee).